The sequence spans 400 residues: Tyrosine--tRNA ligase (400 aa).

A 'HIGH' region motif is present at residues 45–54; that stretch reads PTAPDLHLGH. The 'KMSKS' region motif lies at 230–234; it reads KMSKS. Lys233 is an ATP binding site. Residues 339–399 enclose the S4 RNA-binding domain; it reads EWIARVLVIA…GKRRFAKVII (61 aa).

This sequence belongs to the class-I aminoacyl-tRNA synthetase family. TyrS type 2 subfamily. Homodimer.

It localises to the cytoplasm. The catalysed reaction is tRNA(Tyr) + L-tyrosine + ATP = L-tyrosyl-tRNA(Tyr) + AMP + diphosphate + H(+). In terms of biological role, catalyzes the attachment of tyrosine to tRNA(Tyr) in a two-step reaction: tyrosine is first activated by ATP to form Tyr-AMP and then transferred to the acceptor end of tRNA(Tyr). In Helicobacter hepaticus (strain ATCC 51449 / 3B1), this protein is Tyrosine--tRNA ligase.